The sequence spans 230 residues: SPbeta prophage-derived putative HNH endonuclease YoqL (230 aa).

Residues 136-188 form the HNH domain; that stretch reads CSYCGLKIEDHKILFKGTYIQSDFHKEHVDHKGANDISNCIPACKSCNSSKHD.

The protein belongs to the HNH nuclease family.

The chain is SPbeta prophage-derived putative HNH endonuclease YoqL (yoqL) from Bacillus subtilis (strain 168).